Reading from the N-terminus, the 87-residue chain is Phosphocarrier protein HPr (87 aa).

An HPr domain is found at 1-87 (MAEKTFTITA…EEVIKEGLGE (87 aa)). Residue histidine 15 is the Pros-phosphohistidine intermediate of the active site. At serine 46 the chain carries Phosphoserine; by HPrK/P.

The protein belongs to the HPr family.

Its subcellular location is the cytoplasm. Phosphorylation on Ser-46 inhibits the phosphoryl transfer from enzyme I to HPr. General (non sugar-specific) component of the phosphoenolpyruvate-dependent sugar phosphotransferase system (sugar PTS). This major carbohydrate active-transport system catalyzes the phosphorylation of incoming sugar substrates concomitantly with their translocation across the cell membrane. The phosphoryl group from phosphoenolpyruvate (PEP) is transferred to the phosphoryl carrier protein HPr by enzyme I. Phospho-HPr then transfers it to the PTS EIIA domain. In terms of biological role, P-Ser-HPr interacts with the catabolite control protein A (CcpA), forming a complex that binds to DNA at the catabolite response elements cre, operator sites preceding a large number of catabolite-regulated genes. Thus, P-Ser-HPr is a corepressor in carbon catabolite repression (CCR), a mechanism that allows bacteria to coordinate and optimize the utilization of available carbon sources. P-Ser-HPr also plays a role in inducer exclusion, in which it probably interacts with several non-PTS permeases and inhibits their transport activity. The chain is Phosphocarrier protein HPr (ptsH) from Halalkalibacterium halodurans (strain ATCC BAA-125 / DSM 18197 / FERM 7344 / JCM 9153 / C-125) (Bacillus halodurans).